The chain runs to 536 residues: Nucleosome assembly protein 1-like 3 (536 aa).

Disordered regions lie at residues 1-104 (MAEA…DKLP) and 160-338 (PTEE…KEDP). Residues 35-75 (SNSSSSTTSCGSTGSSSSSSSSSSSSSSSSSGSSGSSSNGS) show a composition bias toward low complexity. A compositionally biased stretch (basic residues) spans 77-95 (LHQKKRVPGPSRRAQRRPS). Residues 160-184 (PTEEECEWNSEEEFSGDEEMQDDTP) are compositionally biased toward acidic residues. Composition is skewed to basic and acidic residues over residues 199–220 (GKEN…PEAK) and 227–269 (PKET…KTDS). The span at 287–300 (TQANAEYTDQPTED) shows a compositional bias: polar residues. Over residues 306 to 324 (PVREAQKRVPETRPEERVN) the composition is skewed to basic and acidic residues.

This sequence belongs to the nucleosome assembly protein (NAP) family.

The protein resides in the nucleus. In Rattus norvegicus (Rat), this protein is Nucleosome assembly protein 1-like 3 (Nap1l3).